The sequence spans 154 residues: Proline dehydrogenase transcriptional activator (154 aa).

Positions 5–66 (IDATDRRILH…MLSPIRLGLI (62 aa)) constitute an HTH asnC-type domain. Residues 24 to 43 (VTELARKVGLSKTPVAARIR) constitute a DNA-binding region (H-T-H motif).

Functionally, transcriptional activator of the putA gene in response to proline. The sequence is that of Proline dehydrogenase transcriptional activator (putR) from Rhodobacter capsulatus (Rhodopseudomonas capsulata).